A 530-amino-acid polypeptide reads, in one-letter code: Ataxin-10 homolog (530 aa).

This sequence belongs to the ataxin-10 family.

It localises to the cytoplasm. May play a role in the regulation of cytokinesis. The chain is Ataxin-10 homolog (CTR86) from Candida glabrata (strain ATCC 2001 / BCRC 20586 / JCM 3761 / NBRC 0622 / NRRL Y-65 / CBS 138) (Yeast).